Reading from the N-terminus, the 143-residue chain is Large ribosomal subunit protein uL15 (143 aa).

The segment at 1–58 (MQLNDLRSAPGARREKHRPGRGIGSGLGKTGGRGHKGQTSRSGGSIAPGFEGGQQPLH) is disordered. Gly residues predominate over residues 21-31 (RGIGSGLGKTG).

Belongs to the universal ribosomal protein uL15 family. Part of the 50S ribosomal subunit.

In terms of biological role, binds to the 23S rRNA. This Ectopseudomonas mendocina (strain ymp) (Pseudomonas mendocina) protein is Large ribosomal subunit protein uL15.